Reading from the N-terminus, the 517-residue chain is Beta-galactoside alpha-2,6-sialyltransferase 2 (517 aa).

Over Met-1–Gln-10 the chain is Cytoplasmic. Residues Phe-11 to Thr-31 form a helical; Signal-anchor for type II membrane protein membrane-spanning segment. Over Asp-32–Thr-517 the chain is Lumenal. 3 N-linked (GlcNAc...) asparagine glycosylation sites follow: Asn-201, Asn-298, and Asn-328. 3 cysteine pairs are disulfide-bonded: Cys-244/Cys-510, Cys-287/Cys-439, and Cys-457/Cys-468.

Belongs to the glycosyltransferase 29 family.

Its subcellular location is the golgi apparatus. The protein resides in the golgi stack membrane. It catalyses the reaction a beta-D-galactoside + CMP-N-acetyl-beta-neuraminate = an N-acetyl-alpha-neuraminyl-(2-&gt;6)-beta-D-galactosyl derivative + CMP + H(+). Functionally, transfers sialic acid from the donor of substrate CMP-sialic acid to galactose containing acceptor substrates. This chain is Beta-galactoside alpha-2,6-sialyltransferase 2 (st6gal2), found in Xenopus tropicalis (Western clawed frog).